A 258-amino-acid chain; its full sequence is 5'-nucleotidase SurE (258 aa).

Positions 13, 14, 44, and 92 each coordinate a divalent metal cation. Residues 237–258 (SPLTAPHSTEHHDALDGIATEF) are disordered.

It belongs to the SurE nucleotidase family. It depends on a divalent metal cation as a cofactor.

Its subcellular location is the cytoplasm. It carries out the reaction a ribonucleoside 5'-phosphate + H2O = a ribonucleoside + phosphate. Functionally, nucleotidase that shows phosphatase activity on nucleoside 5'-monophosphates. The sequence is that of 5'-nucleotidase SurE from Halobacterium salinarum (strain ATCC 29341 / DSM 671 / R1).